Consider the following 337-residue polypeptide: GTP 3',8-cyclase (337 aa).

Positions 17-242 (AFQRRYYYLR…QSKGLLDGPA (226 aa)) constitute a Radical SAM core domain. GTP is bound at residue Arg26. 2 residues coordinate [4Fe-4S] cluster: Cys33 and Cys37. Tyr39 is an S-adenosyl-L-methionine binding site. Residue Cys40 coordinates [4Fe-4S] cluster. Arg76 contacts GTP. Residue Gly80 coordinates S-adenosyl-L-methionine. GTP is bound at residue Thr107. Ser131 contacts S-adenosyl-L-methionine. Position 168 (Lys168) interacts with GTP. Residue Met202 coordinates S-adenosyl-L-methionine. Residues Cys265 and Cys268 each coordinate [4Fe-4S] cluster. 270–272 (RLR) serves as a coordination point for GTP. Cys282 provides a ligand contact to [4Fe-4S] cluster.

The protein belongs to the radical SAM superfamily. MoaA family. In terms of assembly, monomer and homodimer. The cofactor is [4Fe-4S] cluster.

It catalyses the reaction GTP + AH2 + S-adenosyl-L-methionine = (8S)-3',8-cyclo-7,8-dihydroguanosine 5'-triphosphate + 5'-deoxyadenosine + L-methionine + A + H(+). The protein operates within cofactor biosynthesis; molybdopterin biosynthesis. Catalyzes the cyclization of GTP to (8S)-3',8-cyclo-7,8-dihydroguanosine 5'-triphosphate. This is GTP 3',8-cyclase from Pasteurella multocida (strain Pm70).